We begin with the raw amino-acid sequence, 461 residues long: Cysteine--tRNA ligase (461 aa).

Zn(2+) is bound at residue C28. The 'HIGH' region motif lies at M30–H40. C212, H237, and E241 together coordinate Zn(2+). Positions K269–S273 match the 'KMSKS' region motif. K272 contributes to the ATP binding site.

This sequence belongs to the class-I aminoacyl-tRNA synthetase family. Monomer. Requires Zn(2+) as cofactor.

It localises to the cytoplasm. The enzyme catalyses tRNA(Cys) + L-cysteine + ATP = L-cysteinyl-tRNA(Cys) + AMP + diphosphate. The protein is Cysteine--tRNA ligase of Aromatoleum aromaticum (strain DSM 19018 / LMG 30748 / EbN1) (Azoarcus sp. (strain EbN1)).